The sequence spans 351 residues: Transmembrane protein 255A (351 aa).

The next 4 helical transmembrane spans lie at 30–50 (IYVT…GLAA), 57–77 (VTVG…LGII), 89–109 (LVAS…CAIV), and 226–246 (TILN…LGGF). The tract at residues 302 to 331 (FPSSPPSGLSDEQEPQSPSPSPSYMWSSSA) is disordered.

It belongs to the TMEM255 family.

Its subcellular location is the membrane. The protein is Transmembrane protein 255A (Tmem255a) of Mus musculus (Mouse).